The primary structure comprises 588 residues: DELLA protein GAI (588 aa).

Over residues 1–15 (MKRDRDRDREREKRA) the composition is skewed to basic and acidic residues. The segment at 1 to 38 (MKRDRDRDREREKRAFSNGAVSSGKSKIWEEDEEEKPD) is disordered. Residues 42-46 (DELLA) carry the DELLA motif motif. Residues 152–177 (GAVFNSDSNKRHRSTTSSFSTTSSSM) form a disordered region. A compositionally biased stretch (low complexity) spans 166-177 (TTSSFSTTSSSM). Residues 190–574 (VDSQETGVRL…RPLIATSAWK (385 aa)) enclose the GRAS domain. The interval 197–251 (VRLVHTLMACAEAVQQENLTLADQLVRHIGILAVSQSGAMRKVATYFAEALARRI) is leucine repeat I (LRI). Residues 269–334 (QMHFYETCPY…GGPPAFRLTG (66 aa)) form a VHIID region. The VHIID signature appears at 300 to 304 (VHVID). The interval 348 to 380 (QVGWKLAQLAETIGVEFEFRGFVANSLADLDAT) is leucine repeat II (LRII). Residues 392–495 (VAINSVFELH…EVYLGRQICN (104 aa)) are PFYRE. Residues 400–404 (LHRLL) carry the LXXLL motif motif. The tract at residues 498–574 (ACEGSDRVER…RPLIATSAWK (77 aa)) is SAW.

It belongs to the GRAS family. DELLA subfamily. Post-translationally, phosphorylated. In terms of processing, ubiquitinated. Upon GA application it is ubiquitinated, leading to its subsequent degradation. Expressed in both vegetative and reproductive tissues.

It is found in the nucleus. In terms of biological role, probable transcriptional regulator that acts as a repressor of the gibberellin (GA) signaling pathway. Probably acts by participating in large multiprotein complexes that repress transcription of GA-inducible genes. Upon GA application, it is degraded by the proteasome, allowing the GA signaling pathway. Its degradation is not essential for germination. The sequence is that of DELLA protein GAI (GAI) from Solanum lycopersicum (Tomato).